A 255-amino-acid polypeptide reads, in one-letter code: Large ribosomal subunit protein uL4 (255 aa).

Belongs to the universal ribosomal protein uL4 family. As to quaternary structure, part of the 50S ribosomal subunit.

Its function is as follows. One of the primary rRNA binding proteins, this protein initially binds near the 5'-end of the 23S rRNA. It is important during the early stages of 50S assembly. It makes multiple contacts with different domains of the 23S rRNA in the assembled 50S subunit and ribosome. Forms part of the polypeptide exit tunnel. The chain is Large ribosomal subunit protein uL4 from Thermoplasma volcanium (strain ATCC 51530 / DSM 4299 / JCM 9571 / NBRC 15438 / GSS1).